A 155-amino-acid polypeptide reads, in one-letter code: Deoxyuridine 5'-triphosphate nucleotidohydrolase (155 aa).

Substrate is bound by residues 74-76, Asn-87, and 91-93; these read RSG and LID.

The protein belongs to the dUTPase family. Requires Mg(2+) as cofactor.

It catalyses the reaction dUTP + H2O = dUMP + diphosphate + H(+). The protein operates within pyrimidine metabolism; dUMP biosynthesis; dUMP from dCTP (dUTP route): step 2/2. Functionally, this enzyme is involved in nucleotide metabolism: it produces dUMP, the immediate precursor of thymidine nucleotides and it decreases the intracellular concentration of dUTP so that uracil cannot be incorporated into DNA. In Xanthomonas axonopodis pv. citri (strain 306), this protein is Deoxyuridine 5'-triphosphate nucleotidohydrolase.